Reading from the N-terminus, the 186-residue chain is Proline-rich protein 3 (186 aa).

The segment at 1–97 (MPKRKKQNQP…LGPRSSPYGR (97 aa)) is disordered. Pro residues-rich tracts occupy residues 33 to 44 (MGPPSLLGPPPM) and 67 to 79 (MIPP…PPPR). The segment at 153–181 (KSDRPVCRHFSKKGHCRYEDHCAFYHPGV) adopts a C3H1-type zinc-finger fold.

In Rattus norvegicus (Rat), this protein is Proline-rich protein 3 (Prr3).